The chain runs to 231 residues: DNA mismatch repair protein MutH (231 aa).

It belongs to the MutH family.

Its subcellular location is the cytoplasm. Its function is as follows. Sequence-specific endonuclease that cleaves unmethylated GATC sequences. It is involved in DNA mismatch repair. The sequence is that of DNA mismatch repair protein MutH from Klebsiella pneumoniae subsp. pneumoniae (strain ATCC 700721 / MGH 78578).